The chain runs to 441 residues: Xylose isomerase 1 (441 aa).

Residues histidine 105 and aspartate 108 contribute to the active site. Residues glutamate 236, glutamate 272, histidine 275, aspartate 300, aspartate 311, aspartate 313, and aspartate 343 each coordinate Mg(2+).

It belongs to the xylose isomerase family. As to quaternary structure, homotetramer. Mg(2+) is required as a cofactor.

Its subcellular location is the cytoplasm. The enzyme catalyses alpha-D-xylose = alpha-D-xylulofuranose. This is Xylose isomerase 1 (xylA1) from Xanthomonas axonopodis pv. citri (strain 306).